Here is a 194-residue protein sequence, read N- to C-terminus: NADH-quinone oxidoreductase subunit B 1 (194 aa).

[4Fe-4S] cluster contacts are provided by cysteine 47, cysteine 48, cysteine 113, and cysteine 142.

This sequence belongs to the complex I 20 kDa subunit family. NDH-1 is composed of 14 different subunits. Subunits NuoB, C, D, E, F, and G constitute the peripheral sector of the complex. The cofactor is [4Fe-4S] cluster.

Its subcellular location is the cell inner membrane. The enzyme catalyses a quinone + NADH + 5 H(+)(in) = a quinol + NAD(+) + 4 H(+)(out). Functionally, NDH-1 shuttles electrons from NADH, via FMN and iron-sulfur (Fe-S) centers, to quinones in the respiratory chain. The immediate electron acceptor for the enzyme in this species is believed to be ubiquinone. Couples the redox reaction to proton translocation (for every two electrons transferred, four hydrogen ions are translocated across the cytoplasmic membrane), and thus conserves the redox energy in a proton gradient. The sequence is that of NADH-quinone oxidoreductase subunit B 1 from Sorangium cellulosum (strain So ce56) (Polyangium cellulosum (strain So ce56)).